A 526-amino-acid polypeptide reads, in one-letter code: Peptide chain release factor 3 (526 aa).

The tr-type G domain maps to 9–277 (DKRRTFAIIS…GIVEWAPRPQ (269 aa)). GTP is bound by residues 18-25 (SHPDAGKT), 86-90 (DTPGH), and 140-143 (NKLD).

The protein belongs to the TRAFAC class translation factor GTPase superfamily. Classic translation factor GTPase family. PrfC subfamily.

It localises to the cytoplasm. Increases the formation of ribosomal termination complexes and stimulates activities of RF-1 and RF-2. It binds guanine nucleotides and has strong preference for UGA stop codons. It may interact directly with the ribosome. The stimulation of RF-1 and RF-2 is significantly reduced by GTP and GDP, but not by GMP. The sequence is that of Peptide chain release factor 3 from Shewanella loihica (strain ATCC BAA-1088 / PV-4).